The primary structure comprises 226 residues: Protein GrpE (226 aa).

2 disordered regions span residues 1-24 and 205-226; these read MADE…PRDR and GVSK…EDNA. Residues 217 to 226 are compositionally biased toward polar residues; the sequence is NGASTSEDNA.

It belongs to the GrpE family. As to quaternary structure, homodimer.

The protein resides in the cytoplasm. Participates actively in the response to hyperosmotic and heat shock by preventing the aggregation of stress-denatured proteins, in association with DnaK and GrpE. It is the nucleotide exchange factor for DnaK and may function as a thermosensor. Unfolded proteins bind initially to DnaJ; upon interaction with the DnaJ-bound protein, DnaK hydrolyzes its bound ATP, resulting in the formation of a stable complex. GrpE releases ADP from DnaK; ATP binding to DnaK triggers the release of the substrate protein, thus completing the reaction cycle. Several rounds of ATP-dependent interactions between DnaJ, DnaK and GrpE are required for fully efficient folding. The polypeptide is Protein GrpE (Brucella melitensis biotype 1 (strain ATCC 23456 / CCUG 17765 / NCTC 10094 / 16M)).